We begin with the raw amino-acid sequence, 313 residues long: Ribosomal RNA small subunit methyltransferase H (313 aa).

Residues 35–37 (GGH), D55, F79, D101, and Q108 contribute to the S-adenosyl-L-methionine site. The interval 276-300 (QGGPTLKSVGKMMPPDDEVADNPRA) is disordered.

It belongs to the methyltransferase superfamily. RsmH family.

It localises to the cytoplasm. It catalyses the reaction cytidine(1402) in 16S rRNA + S-adenosyl-L-methionine = N(4)-methylcytidine(1402) in 16S rRNA + S-adenosyl-L-homocysteine + H(+). Its function is as follows. Specifically methylates the N4 position of cytidine in position 1402 (C1402) of 16S rRNA. This is Ribosomal RNA small subunit methyltransferase H from Dickeya chrysanthemi (strain Ech1591) (Dickeya zeae (strain Ech1591)).